Reading from the N-terminus, the 378-residue chain is UPF0754 membrane protein SH1116 (378 aa).

A run of 2 helical transmembrane segments spans residues 4–24 and 358–378; these read FLVI…TNVI and SLGF…AIFV.

Belongs to the UPF0754 family.

The protein localises to the cell membrane. The polypeptide is UPF0754 membrane protein SH1116 (Staphylococcus haemolyticus (strain JCSC1435)).